Consider the following 1097-residue polypeptide: MSSSALQVAKTGTYLPDLVEVQRASFKWFLEKGLIEELQNFSPISDYTGKLELHFIGEEYRLKRPRHDVEEAKRRDATFASQMYVTCRLINKETGEIKEQEVFIGELPLMTERGTFIINGAERVIVNQIVRSPGVYFKDEQDKNGRRTYNASVIPNRGAWLKFETDKNNLLYVRVDKTRKINAHVLMRAMGLSDNDVVDKLRHPEFYQNSIESANDEGINSEDQALLELYKKLRPGEPPSVSGGQQLLFSRFFDPKRYDLGRVGRYKINKKLRLTVPDDVRTLTHEDVLSTIDYLINLELDIGGASLDDIDHLGNRRVRSVGELLQNQVRVGLNRLERIIKERMTVGETDSLTPAQLVNPKPLVAAIKEFFGSSQLSQFMDQTNPLAELTHKRRISALGPGGLTRERAGFAVRDIHPSHYGRLCPIETPEGPNAGLINSLATHARVNEYGFIETPFWKVNNGKVNKDGDPIYLSADLEDECRVAPGDVATDKDGNILANLIPVRYRQDFEKVPPEQVDYVQLSPVQVISVATSLIPFLEHDDANRALMGSNMQRQAVPLLRPERPLVGTGLESQVARDSGMVPITKVNGTVSYVDANEIVVKGEDGNEHFHYLQKYQRSNQDTCLNQRPIVNIGDQVISGQVLADGSACEGGEIALGQNVLIAYMPWEGYNYEDAILVSERMVTDDLYTSVHIEKYEIEARQTKLGPEEITREIPNISEDSLNNLDEMGIIRIGAFVESGDILVGKVTPKGESDQPPEEKLLRAIFGEKARDVRDNSLRVPKTEKGRVLDVRIYTREQGDELPPGANMVVRVYVAQRRKIQVGDKMAGRHGNKGIISRILPREDMPYLPDGTPVDIVLNPLGVPSRMNVGQVFELLMGWAASNLNCRVKVVPFDEMYGAEKSHQTVQAFLEEASKQPGKAWIYNPEDPGKLLLKDGRTGEPFDQPVAVGYSHFLKLVHLVDDKIHARSTGPYSLVTQQPLGGKAQQGGQRLGEMEVWALEAYGAAYTLQELLTVKSDDMQGRNEALNAIVKGKPIPRPGTPESFKVLMRELQSLGLDIGVYTDEGKEVDLMQDINPRRNTPSRPTYESLGTSEYEED.

The segment at 1073–1097 (DINPRRNTPSRPTYESLGTSEYEED) is disordered. Positions 1077–1091 (RRNTPSRPTYESLGT) are enriched in polar residues.

The protein belongs to the RNA polymerase beta chain family. In terms of assembly, in cyanobacteria the RNAP catalytic core is composed of 2 alpha, 1 beta, 1 beta', 1 gamma and 1 omega subunit. When a sigma factor is associated with the core the holoenzyme is formed, which can initiate transcription.

The enzyme catalyses RNA(n) + a ribonucleoside 5'-triphosphate = RNA(n+1) + diphosphate. DNA-dependent RNA polymerase catalyzes the transcription of DNA into RNA using the four ribonucleoside triphosphates as substrates. This is DNA-directed RNA polymerase subunit beta from Prochlorococcus marinus (strain MIT 9312).